A 248-amino-acid chain; its full sequence is AA9 family lytic polysaccharide monooxygenase G (248 aa).

The N-terminal stretch at 1 to 21 is a signal peptide; it reads MLPNAAGLLVAGVVSLSGVAA. H22 provides a ligand contact to Cu(2+). A glycan (N-linked (GlcNAc...) asparagine) is linked at N58. C77 and C195 form a disulfide bridge. H107 lines the Cu(2+) pocket. An O2-binding site is contributed by Q190. Y192 is a Cu(2+) binding site. N203 is a glycosylation site (N-linked (GlcNAc...) asparagine).

Belongs to the polysaccharide monooxygenase AA9 family. Cu(2+) serves as cofactor.

The protein resides in the secreted. The enzyme catalyses [(1-&gt;4)-beta-D-glucosyl]n+m + reduced acceptor + O2 = 4-dehydro-beta-D-glucosyl-[(1-&gt;4)-beta-D-glucosyl]n-1 + [(1-&gt;4)-beta-D-glucosyl]m + acceptor + H2O.. Lytic polysaccharide monooxygenase (LPMO) that depolymerizes crystalline and amorphous polysaccharides via the oxidation of scissile alpha- or beta-(1-4)-glycosidic bonds, yielding C1 or C4 oxidation products. Catalysis by LPMOs requires the reduction of the active-site copper from Cu(II) to Cu(I) by a reducing agent and H(2)O(2) or O(2) as a cosubstrate. The protein is AA9 family lytic polysaccharide monooxygenase G of Malbranchea cinnamomea (Thermophilic fungus).